The following is a 157-amino-acid chain: D-aminoacyl-tRNA deacylase (157 aa).

The Gly-cisPro motif, important for rejection of L-amino acids signature appears at 137-138 (GP).

This sequence belongs to the DTD family. In terms of assembly, homodimer.

Its subcellular location is the cytoplasm. It catalyses the reaction glycyl-tRNA(Ala) + H2O = tRNA(Ala) + glycine + H(+). The enzyme catalyses a D-aminoacyl-tRNA + H2O = a tRNA + a D-alpha-amino acid + H(+). In terms of biological role, an aminoacyl-tRNA editing enzyme that deacylates mischarged D-aminoacyl-tRNAs. Also deacylates mischarged glycyl-tRNA(Ala), protecting cells against glycine mischarging by AlaRS. Acts via tRNA-based rather than protein-based catalysis; rejects L-amino acids rather than detecting D-amino acids in the active site. By recycling D-aminoacyl-tRNA to D-amino acids and free tRNA molecules, this enzyme counteracts the toxicity associated with the formation of D-aminoacyl-tRNA entities in vivo and helps enforce protein L-homochirality. This Roseiflexus castenholzii (strain DSM 13941 / HLO8) protein is D-aminoacyl-tRNA deacylase.